The primary structure comprises 269 residues: Tryptophan synthase alpha chain (269 aa).

Residues E49 and D60 each act as proton acceptor in the active site.

The protein belongs to the TrpA family. In terms of assembly, tetramer of two alpha and two beta chains.

It catalyses the reaction (1S,2R)-1-C-(indol-3-yl)glycerol 3-phosphate + L-serine = D-glyceraldehyde 3-phosphate + L-tryptophan + H2O. It participates in amino-acid biosynthesis; L-tryptophan biosynthesis; L-tryptophan from chorismate: step 5/5. In terms of biological role, the alpha subunit is responsible for the aldol cleavage of indoleglycerol phosphate to indole and glyceraldehyde 3-phosphate. This chain is Tryptophan synthase alpha chain, found in Enterobacter sp. (strain 638).